The sequence spans 99 residues: Evasin P1162 (99 aa).

The first 28 residues, 1-28 (MEVKTFAFLQIAVCIAIGIELICAGTNA), serve as a signal peptide directing secretion. Disulfide bonds link Cys-40/Cys-59, Cys-44/Cys-61, and Cys-55/Cys-72. Residues Asn-43, Asn-49, Asn-58, and Asn-85 are each glycosylated (N-linked (GlcNAc...) asparagine).

The protein localises to the secreted. Its function is as follows. Salivary chemokine-binding protein which binds to host chemokines CXCL1, CXCL2, CXCL3, CXCL5 and CXCL8. In Ixodes ricinus (Common tick), this protein is Evasin P1162.